Here is a 315-residue protein sequence, read N- to C-terminus: Tyrosine recombinase XerC (315 aa).

A Core-binding (CB) domain is found at 1 to 103; sequence MIASFYAFLD…AIKSFAKFCV (103 aa). One can recognise a Tyr recombinase domain in the interval 124–306; sequence ELPSPLTYEQ…SMKLKKQIHD (183 aa). Residues arginine 164, lysine 188, histidine 258, arginine 261, and histidine 284 contribute to the active site. Residue tyrosine 293 is the O-(3'-phospho-DNA)-tyrosine intermediate of the active site.

The protein belongs to the 'phage' integrase family. XerC subfamily. As to quaternary structure, forms a cyclic heterotetrameric complex composed of two molecules of XerC and two molecules of XerD.

The protein resides in the cytoplasm. Functionally, site-specific tyrosine recombinase, which acts by catalyzing the cutting and rejoining of the recombining DNA molecules. The XerC-XerD complex is essential to convert dimers of the bacterial chromosome into monomers to permit their segregation at cell division. It also contributes to the segregational stability of plasmids. This is Tyrosine recombinase XerC from Chlamydia muridarum (strain MoPn / Nigg).